The sequence spans 120 residues: NAD(P)H-quinone oxidoreductase subunit 3, chloroplastic (120 aa).

3 helical membrane passes run 9–29, 62–82, and 88–108; these read IFWA…FLSG, YYMF…LYPW, and VLGV…IVGL.

This sequence belongs to the complex I subunit 3 family. As to quaternary structure, NDH is composed of at least 16 different subunits, 5 of which are encoded in the nucleus.

Its subcellular location is the plastid. It is found in the chloroplast thylakoid membrane. It carries out the reaction a plastoquinone + NADH + (n+1) H(+)(in) = a plastoquinol + NAD(+) + n H(+)(out). It catalyses the reaction a plastoquinone + NADPH + (n+1) H(+)(in) = a plastoquinol + NADP(+) + n H(+)(out). NDH shuttles electrons from NAD(P)H:plastoquinone, via FMN and iron-sulfur (Fe-S) centers, to quinones in the photosynthetic chain and possibly in a chloroplast respiratory chain. The immediate electron acceptor for the enzyme in this species is believed to be plastoquinone. Couples the redox reaction to proton translocation, and thus conserves the redox energy in a proton gradient. This Trachelium caeruleum (Blue throatwort) protein is NAD(P)H-quinone oxidoreductase subunit 3, chloroplastic.